The chain runs to 162 residues: NADH-ubiquinone oxidoreductase 24 kDa subunit homolog C11E3.12, mitochondrial (162 aa).

The [2Fe-2S] cluster site is built by C88, C93, C125, and C129.

It belongs to the complex I 24 kDa subunit family. It depends on [2Fe-2S] cluster as a cofactor.

The protein localises to the mitochondrion. This Schizosaccharomyces pombe (strain 972 / ATCC 24843) (Fission yeast) protein is NADH-ubiquinone oxidoreductase 24 kDa subunit homolog C11E3.12, mitochondrial.